A 347-amino-acid chain; its full sequence is RNA 3'-terminal phosphate cyclase (347 aa).

ATP is bound by residues Q101 and 286–289 (HMAD). H312 acts as the Tele-AMP-histidine intermediate in catalysis.

This sequence belongs to the RNA 3'-terminal cyclase family. Type 1 subfamily.

Its subcellular location is the cytoplasm. It catalyses the reaction a 3'-end 3'-phospho-ribonucleotide-RNA + ATP = a 3'-end 2',3'-cyclophospho-ribonucleotide-RNA + AMP + diphosphate. Catalyzes the conversion of 3'-phosphate to a 2',3'-cyclic phosphodiester at the end of RNA. The mechanism of action of the enzyme occurs in 3 steps: (A) adenylation of the enzyme by ATP; (B) transfer of adenylate to an RNA-N3'P to produce RNA-N3'PP5'A; (C) and attack of the adjacent 2'-hydroxyl on the 3'-phosphorus in the diester linkage to produce the cyclic end product. The biological role of this enzyme is unknown but it is likely to function in some aspects of cellular RNA processing. The polypeptide is RNA 3'-terminal phosphate cyclase (Pyrobaculum neutrophilum (strain DSM 2338 / JCM 9278 / NBRC 100436 / V24Sta) (Thermoproteus neutrophilus)).